Consider the following 72-residue polypeptide: DNA-directed RNA polymerase subunit epsilon (72 aa).

The protein belongs to the RNA polymerase subunit epsilon family. In terms of assembly, RNAP is composed of a core of 2 alpha, a beta and a beta' subunit. The core is associated with a delta subunit, and at least one of epsilon or omega. When a sigma factor is associated with the core the holoenzyme is formed, which can initiate transcription.

The enzyme catalyses RNA(n) + a ribonucleoside 5'-triphosphate = RNA(n+1) + diphosphate. Its function is as follows. A non-essential component of RNA polymerase (RNAP). The chain is DNA-directed RNA polymerase subunit epsilon from Levilactobacillus brevis (strain ATCC 367 / BCRC 12310 / CIP 105137 / JCM 1170 / LMG 11437 / NCIMB 947 / NCTC 947) (Lactobacillus brevis).